Here is a 110-residue protein sequence, read N- to C-terminus: U1-lycotoxin-Ls1dd (110 aa).

The signal sequence occupies residues 1–20; that stretch reads MKFVLLFGVLLVTLFSYSSA. Residues 21-44 constitute a propeptide that is removed on maturation; that stretch reads EMLDDFDQADEDELLSLIEKEEAR. 4 disulfides stabilise this stretch: Cys47/Cys62, Cys54/Cys71, Cys61/Cys89, and Cys73/Cys87.

It belongs to the neurotoxin 19 (CSTX) family. 03 subfamily. As to expression, expressed by the venom gland.

It localises to the secreted. This chain is U1-lycotoxin-Ls1dd, found in Lycosa singoriensis (Wolf spider).